A 335-amino-acid chain; its full sequence is Pregnancy-specific beta-1-glycoprotein 5 (335 aa).

Residues 1–34 form the signal peptide; the sequence is MGPLSAPPCTQHITWKGLLLTASLLNFWNLPITA. The Ig-like V-type domain occupies 35–144; that stretch reads QVTIEALPPK…TGYFTFNLYL (110 aa). N-linked (GlcNAc...) asparagine glycosylation is found at Asn104 and Asn111. Positions 127 to 129 match the Cell attachment site motif; that stretch reads RGD. Ig-like C2-type domains follow at residues 147–234 and 239–317; these read PKPY…VTLN and PDLP…KSMT. 2 disulfide bridges follow: Cys169–Cys217 and Cys261–Cys301. N-linked (GlcNAc...) asparagine glycosylation is found at Asn175 and Asn210.

Belongs to the immunoglobulin superfamily. CEA family. In terms of tissue distribution, synthesized by syncytiotrophoblast of the placenta.

The protein resides in the secreted. The chain is Pregnancy-specific beta-1-glycoprotein 5 (PSG5) from Homo sapiens (Human).